Reading from the N-terminus, the 469-residue chain is Phenolic glucoside malonyltransferase 1 (469 aa).

M1 is subject to N-acetylmethionine. H169 acts as the Proton acceptor in catalysis. The short motif at 169 to 173 is the HXXXD motif element; that stretch reads HAVLD. 291–292 provides a ligand contact to malonyl-CoA; sequence ST. Residue D413 is the Proton acceptor of the active site. The DFGWG motif signature appears at 413 to 417; it reads DFGWG.

It belongs to the plant acyltransferase family. Phenolic glucoside malonyltransferase subfamily.

It carries out the reaction a flavonol 3-O-beta-D-glucoside + malonyl-CoA = a flavonol 3-O-(6-O-malonyl-beta-D-glucoside) + CoA. It catalyses the reaction a flavonol 7-O-beta-D-glucoside + malonyl-CoA = a flavonol 7-O-(6-O-malonyl-beta-D-glucoside) + CoA. Malonyltransferase acting on xenobiotic glucosides. Has activity toward 2-Naphthol glucoside (2NAG), 1-Naphthol glucoside (1NAG), kaempferol 7-O-glucoside, kaempferol 3-O-glucoside, hydroxycoumarin glucosides, phenol-glucosides and isoflavone glucoside (daidzin), but not toward 4-coumaroyl glucoside, kaempferol 3,7-O-diglucoside, salicylic acid glucoside and phlorizin. In vivo, seems to be involved in the malonylation of 2-Naphthol glucoside while PMAT2 would be involved in the malonylation of 4-methylumbelliferone glucoside or 4-nitrophenyl glucoside. This Arabidopsis thaliana (Mouse-ear cress) protein is Phenolic glucoside malonyltransferase 1 (PMAT1).